Here is a 361-residue protein sequence, read N- to C-terminus: RuBisCO accumulation factor 1 (361 aa).

The tract at residues 16–197 is N-terminal alpha-helix; the sequence is NELAQELLRK…RKQIEQLLVD (182 aa). Positions 221-347 are C-terminal beta-sheet; the sequence is PRIVPVVGQL…VIILVRPRRI (127 aa).

Belongs to the RAF family. Homodimer. Forms an RbcL(8)-Raf1(8) complex. Each Raf1 dimer clamps the exterior of an RbcL dimer, protecting it. The extreme C-terminus (residues 354-361) inserts into the catalytic pocket of RbcL where the Glu-361 forms a salt bridge with 'Lys-202'. This insertion probably contributes to the assembly of RbcL(8). Forms complexes of many stoichiometries with RbcL with and without RbcS. RbcX and Raf1 can bind simultaneously to RbcL.

The protein resides in the cytoplasm. Functionally, a major RuBisCO chaperone. Acts after GroEL-GroES chaperonin to fold and/or assemble the large subunit of RuBisCO (ccbL, rbcL). Cooperates with RbcX in RbcL folding, plays the major role in assembly of dimers into RbcL(8)-Raf1(8) intermediate complexes. RbcS replaces Raf1, leading to holoenzyme formation. Its function is as follows. In vitro acts as an antagonist to CcmM35, suggesting it might regulate RuBisCO condensation and decondensation. This is RuBisCO accumulation factor 1 from Nostoc sp. (strain PCC 7120 / SAG 25.82 / UTEX 2576).